Here is a 385-residue protein sequence, read N- to C-terminus: MSKRDFYEVLGVSRDASERDIKKAYKRLAMKYHPDRNQGDESAADKFKEVKESYEILTDPQKKAAYDQYGHAAFEQGGGGFGGGGFGGGGADFGDIFGDVFGDIFGGGRRGGGQQRAQRGADLRYNMELSLEEAVRGVSKEIEVPTLVHCDTCDGSGAKKGSSAETCGTCHGHGQVQMRQGFFAVQQTCPTCHGKGKIIRPCNECHGQGRKQKTKTLNVKIPAGVDTGDRIRLSGEGERGEMGAPAGDLYVQVHVKEHHIFEREGNNLYCEVPVSFLMACSMAALGGEVEVPTLDGRVNLKVPTETRAGRMFRMRGKGVKGVRGGGVGDLIVKLVVETPVNLSARQKELLKEFDESCGGDAQLSTNQNLKGFFNGVKKFFDDLTS.

Residues 5–70 (DFYEVLGVSR…QKKAAYDQYG (66 aa)) form the J domain. The segment at 137–214 (GVSKEIEVPT…CHGQGRKQKT (78 aa)) adopts a CR-type zinc-finger fold. Positions 150, 153, 167, 170, 189, 192, 202, and 205 each coordinate Zn(2+). 4 CXXCXGXG motif repeats span residues 150–157 (CDTCDGSG), 167–174 (CGTCHGHG), 189–196 (CPTCHGKG), and 202–209 (CNECHGQG).

Belongs to the DnaJ family. As to quaternary structure, homodimer. Requires Zn(2+) as cofactor.

Its subcellular location is the cytoplasm. Its function is as follows. Participates actively in the response to hyperosmotic and heat shock by preventing the aggregation of stress-denatured proteins and by disaggregating proteins, also in an autonomous, DnaK-independent fashion. Unfolded proteins bind initially to DnaJ; upon interaction with the DnaJ-bound protein, DnaK hydrolyzes its bound ATP, resulting in the formation of a stable complex. GrpE releases ADP from DnaK; ATP binding to DnaK triggers the release of the substrate protein, thus completing the reaction cycle. Several rounds of ATP-dependent interactions between DnaJ, DnaK and GrpE are required for fully efficient folding. Also involved, together with DnaK and GrpE, in the DNA replication of plasmids through activation of initiation proteins. In Vibrio harveyi (Beneckea harveyi), this protein is Chaperone protein DnaJ.